Reading from the N-terminus, the 222-residue chain is Cytidylate kinase (222 aa).

Residue 7–15 coordinates ATP; that stretch reads GPSASGKSS.

It belongs to the cytidylate kinase family. Type 1 subfamily.

It localises to the cytoplasm. It catalyses the reaction CMP + ATP = CDP + ADP. The catalysed reaction is dCMP + ATP = dCDP + ADP. This Borrelia turicatae (strain 91E135) protein is Cytidylate kinase.